The following is a 214-amino-acid chain: Putative pyrophosphatase PpaX (214 aa).

Asp8 (nucleophile) is an active-site residue.

It belongs to the HAD-like hydrolase superfamily. PpaX family. Requires Mg(2+) as cofactor.

It carries out the reaction diphosphate + H2O = 2 phosphate + H(+). The chain is Putative pyrophosphatase PpaX from Clostridium perfringens (strain 13 / Type A).